A 159-amino-acid chain; its full sequence is Ribosomal RNA large subunit methyltransferase H (159 aa).

S-adenosyl-L-methionine-binding residues include L76 and G108.

Belongs to the RNA methyltransferase RlmH family. Homodimer.

Its subcellular location is the cytoplasm. The enzyme catalyses pseudouridine(1915) in 23S rRNA + S-adenosyl-L-methionine = N(3)-methylpseudouridine(1915) in 23S rRNA + S-adenosyl-L-homocysteine + H(+). Specifically methylates the pseudouridine at position 1915 (m3Psi1915) in 23S rRNA. The protein is Ribosomal RNA large subunit methyltransferase H of Pediococcus pentosaceus (strain ATCC 25745 / CCUG 21536 / LMG 10740 / 183-1w).